Here is a 70-residue protein sequence, read N- to C-terminus: MSSPHQDSLLPRFAQGEEGHETTTKFPCLVCVDRVSHTVDIHLSDTKIAVRDSLQRRTQGGGGFHGLRIR.

The disordered stretch occupies residues 1–21 (MSSPHQDSLLPRFAQGEEGHE).

This is Protein FlmC homolog from Escherichia coli.